We begin with the raw amino-acid sequence, 348 residues long: VIP36-like protein (348 aa).

An N-terminal signal peptide occupies residues 1 to 38 (MAVALGPSGWWQRWRRRLSAREVSRMLLLLLLLGSGQG). Residues 39–313 (PRQVGAGQTF…APLPPLSGLA (275 aa)) are Lumenal-facing. The L-type lectin-like domain occupies 49–274 (EYLKREHSLS…DVISLKLFEL (226 aa)). Residues serine 93 and aspartate 128 each contribute to the a carbohydrate site. Ca(2+) is bound by residues aspartate 159, tyrosine 161, and asparagine 163. Residues tyrosine 161 and asparagine 163 each contribute to the a carbohydrate site. Asparagine 181 carries N-linked (GlcNAc...) asparagine glycosylation. An a carbohydrate-binding site is contributed by histidine 188. Aspartate 191 serves as a coordination point for Ca(2+). Cysteine 200 and cysteine 237 are oxidised to a cystine. Residue 258 to 260 (GDL) coordinates a carbohydrate. Residues 314–334 (LFLIVFFSLVFSVFAIVIGII) form a helical membrane-spanning segment. Residues 335 to 348 (LYNKWQDQSRKRFY) are Cytoplasmic-facing. An Endoplasmic reticulum retention signal motif is present at residues 344-346 (RKR).

The protein resides in the endoplasmic reticulum membrane. It localises to the golgi apparatus membrane. Functionally, may be involved in the regulation of export from the endoplasmic reticulum of a subset of glycoproteins. May function as a regulator of ERGIC-53. This Bos taurus (Bovine) protein is VIP36-like protein (LMAN2L).